The chain runs to 572 residues: Proline--tRNA ligase (572 aa).

Belongs to the class-II aminoacyl-tRNA synthetase family. ProS type 1 subfamily. Homodimer.

Its subcellular location is the cytoplasm. The catalysed reaction is tRNA(Pro) + L-proline + ATP = L-prolyl-tRNA(Pro) + AMP + diphosphate. Catalyzes the attachment of proline to tRNA(Pro) in a two-step reaction: proline is first activated by ATP to form Pro-AMP and then transferred to the acceptor end of tRNA(Pro). As ProRS can inadvertently accommodate and process non-cognate amino acids such as alanine and cysteine, to avoid such errors it has two additional distinct editing activities against alanine. One activity is designated as 'pretransfer' editing and involves the tRNA(Pro)-independent hydrolysis of activated Ala-AMP. The other activity is designated 'posttransfer' editing and involves deacylation of mischarged Ala-tRNA(Pro). The misacylated Cys-tRNA(Pro) is not edited by ProRS. The chain is Proline--tRNA ligase from Yersinia pestis bv. Antiqua (strain Antiqua).